The following is a 75-amino-acid chain: Small ribosomal subunit protein bS18 (75 aa).

Belongs to the bacterial ribosomal protein bS18 family. In terms of assembly, part of the 30S ribosomal subunit. Forms a tight heterodimer with protein bS6.

Its function is as follows. Binds as a heterodimer with protein bS6 to the central domain of the 16S rRNA, where it helps stabilize the platform of the 30S subunit. This is Small ribosomal subunit protein bS18 from Thermotoga maritima (strain ATCC 43589 / DSM 3109 / JCM 10099 / NBRC 100826 / MSB8).